A 203-amino-acid chain; its full sequence is Dual-action ribosomal maturation protein DarP (203 aa).

Disordered regions lie at residues 1–31 and 182–203; these read MPPM…SKSQ and GGAS…DDEA. The segment covering 186–203 has biased composition (acidic residues); it reads DSDDEAADDAGDDHDDEA.

The protein belongs to the DarP family.

It is found in the cytoplasm. Its function is as follows. Member of a network of 50S ribosomal subunit biogenesis factors which assembles along the 30S-50S interface, preventing incorrect 23S rRNA structures from forming. Promotes peptidyl transferase center (PTC) maturation. The polypeptide is Dual-action ribosomal maturation protein DarP (Burkholderia cenocepacia (strain HI2424)).